Consider the following 128-residue polypeptide: Fluoride-specific ion channel FluC (128 aa).

4 helical membrane passes run 2 to 22, 37 to 57, 65 to 85, and 101 to 121; these read LTFAPLNFLAIGVGATLGAWL, WGTLTANLVGGYLIGVMVALI, AWIRLAAVTGFLGGLTTFSTF, and AAAYAGASLAGSLAMTGLGLA. Na(+) is bound by residues G77 and T80.

Belongs to the fluoride channel Fluc/FEX (TC 1.A.43) family.

The protein resides in the cell inner membrane. It catalyses the reaction fluoride(in) = fluoride(out). Its activity is regulated as follows. Na(+) is not transported, but it plays an essential structural role and its presence is essential for fluoride channel function. In terms of biological role, fluoride-specific ion channel. Important for reducing fluoride concentration in the cell, thus reducing its toxicity. The chain is Fluoride-specific ion channel FluC from Bordetella bronchiseptica (strain ATCC BAA-588 / NCTC 13252 / RB50) (Alcaligenes bronchisepticus).